Reading from the N-terminus, the 1052-residue chain is Suppressor of RPS4-RLD 1 (1052 aa).

Alanine 2 is subject to N-acetylalanine. 2 TPR repeats span residues 39–72 (ILDI…EPFA) and 74–106 (QAFI…ALQQ). A coiled-coil region spans residues 107 to 136 (TADVKQLLELEELLKDARREIDGILKSHAT). Residues 131 to 181 (LKSHATESPQETPAYHSEKSDEKSDKLDNHESGASSNGNSHESSSELGEQS) form a disordered region. A compositionally biased stretch (basic and acidic residues) spans 146–161 (HSEKSDEKSDKLDNHE). Residues 162–181 (SGASSNGNSHESSSELGEQS) are compositionally biased toward low complexity. TPR repeat units lie at residues 297 to 330 (VDFR…EPTY), 331 to 364 (PEAL…NPAA), 365 to 398 (SEAW…EPNS), 400 to 432 (DVLH…EKDN), 433 to 466 (KSAY…DSNY), 468 to 500 (EAWL…DNRV), 502 to 534 (KAYH…ENTI), 535 to 567 (ECLY…ELDA), and 569 to 591 (EKFV…ASKV). Positions 704-739 (STKGTTKNGKKNRRRERTNILSQNRGGAGCSSSSFS) are disordered. A helical membrane pass occupies residues 966 to 986 (GTAVTGFVVLLGLLLAANMEF).

In terms of assembly, multimer. Interacts with EDS1. Interacts with SNC1 and RPS4. Interacts (via TPR domain) with SGT1 (via TPR domain). Interacts with the TCP transcription factors TCP8, TCP14, TCP15, TCP20, TCP22 and TCP23. Ubiquitous. Not detected in very young flowers and older siliques.

It localises to the nucleus. The protein localises to the cytoplasm. The protein resides in the perinuclear region. Its subcellular location is the membrane. It is found in the microsome. In terms of biological role, negative regulator of effector-triggered immunity associated with the EDS1 resistance pathway. May localize its interactors to a microsomal membrane. May therefore negatively regulate RPS4 and SNC1 translocation to the nucleus. Contributes to the regulation of RPS2 and RPS4 protein levels and negatively regulates SNC1 stability. The protein is Suppressor of RPS4-RLD 1 of Arabidopsis thaliana (Mouse-ear cress).